The primary structure comprises 116 residues: Large ribosomal subunit protein uL18 (116 aa).

Belongs to the universal ribosomal protein uL18 family. In terms of assembly, part of the 50S ribosomal subunit; part of the 5S rRNA/L5/L18/L25 subcomplex. Contacts the 5S and 23S rRNAs.

In terms of biological role, this is one of the proteins that bind and probably mediate the attachment of the 5S RNA into the large ribosomal subunit, where it forms part of the central protuberance. The chain is Large ribosomal subunit protein uL18 from Acinetobacter baumannii (strain AB307-0294).